A 145-amino-acid polypeptide reads, in one-letter code: Small ribosomal subunit protein bS6 (145 aa).

Positions E113 to E132 are enriched in basic and acidic residues. Positions E113 to E145 are disordered. Over residues E133 to E145 the composition is skewed to acidic residues.

It belongs to the bacterial ribosomal protein bS6 family.

Binds together with bS18 to 16S ribosomal RNA. The sequence is that of Small ribosomal subunit protein bS6 from Campylobacter hominis (strain ATCC BAA-381 / DSM 21671 / CCUG 45161 / LMG 19568 / NCTC 13146 / CH001A).